Consider the following 638-residue polypeptide: MDGSGPFSCPICLEPLREPVTLPCGHNFCLACLGALWPHRGASGAGGPGGAARCPLCQEPFPDGLQLRKNHTLSELLQLRQGSGPGSGPGPAPALAPEPSAPSALPSVPEPSAPCAPEPWPAGEEPVRCDACPEGAALPAALSCLSCLASFCPAHLGPHERSPALRGHRLVPPLRRLEESLCPRHLRPLERYCRAERVCLCEACAAQEHRGHELVPLEQERALQEAEQSKVLSAVEDRMDELGAGIAQSRRTVALIKSAAVAERERVSRLFADAAAALQGFQTQVLGFIEEGEAAMLGRSQGDLRRQEEQRSRLSRARQNLSQVPEADSVSFLQELLALRLALEDGCGPGPGPPRELSFTKSSQAVRAVRDMLAVACVNQWEQLRGPGGNEDGPQKLDSEADAEPQDLESTNLLESEAPRDYFLKFAYIVDLDSDTADKFLQLFGTKGVKRVLCPINYPLSPTRFTHCEQVLGEGALDRGTYYWEVEIIEGWVSMGVMAEDFSPQEPYDRGRLGRNAHSCCLQWNGRSFSVWFHGLEAPLPHPFSPTVGVCLEYADRALAFYAVRDGKMSLLRRLKASRPRRGGIPASPIDPFQSRLDSHFAGLFTHRLKPAFFLESVDAHLQIGPLKKSCISVLKRR.

M1 is subject to N-acetylmethionine. Residues 9 to 58 (CPICLEPLREPVTLPCGHNFCLACLGALWPHRGASGAGGPGGAARCPLCQ) form an RING-type zinc finger. Position 72 is a phosphothreonine (T72). A disordered region spans residues 79–119 (LRQGSGPGSGPGPAPALAPEPSAPSALPSVPEPSAPCAPEP). Pro residues-rich tracts occupy residues 88–100 (GPGP…PEPS) and 108–119 (VPEPSAPCAPEP). The B box-type zinc finger occupies 177–217 (LEESLCPRHLRPLERYCRAERVCLCEACAAQEHRGHELVPL). Zn(2+)-binding residues include C182, H185, C204, and H209. A coiled-coil region spans residues 296–324 (MLGRSQGDLRRQEEQRSRLSRARQNLSQV). 2 disordered regions span residues 300–322 (SQGD…QNLS) and 384–411 (LRGP…LEST). Residues 302–312 (GDLRRQEEQRS) are compositionally biased toward basic and acidic residues. One can recognise a B30.2/SPRY domain in the interval 410 to 631 (STNLLESEAP…LQIGPLKKSC (222 aa)). S461 carries the post-translational modification Phosphoserine. R582 bears the Omega-N-methylarginine mark. A Phosphoserine modification is found at S588.

Belongs to the TRIM/RBCC family. In terms of tissue distribution, low expression in most tissues. Higher expression in kidney tubular cells. Overexpressed in astrocytoma tumor cells.

It localises to the cytoplasm. The protein resides in the nucleus. It carries out the reaction S-ubiquitinyl-[E2 ubiquitin-conjugating enzyme]-L-cysteine + [acceptor protein]-L-lysine = [E2 ubiquitin-conjugating enzyme]-L-cysteine + N(6)-ubiquitinyl-[acceptor protein]-L-lysine.. It participates in protein modification; protein ubiquitination. Functionally, E3 ubiquitin-protein ligase that mediates the ubiquitination and proteasomal degradation of CYLD. This Homo sapiens (Human) protein is E3 ubiquitin-protein ligase TRIM47.